The sequence spans 70 residues: MKARLLLLSVVILVGMVSAENEKAGSCPDVNQPIPPLGLCRNMCESDSGCPNNEKCCKNGCGFMTCSRPR.

An N-terminal signal peptide occupies residues 1-19 (MKARLLLLSVVILVGMVSA). Residues 20-70 (ENEKAGSCPDVNQPIPPLGLCRNMCESDSGCPNNEKCCKNGCGFMTCSRPR) form the WAP domain. 4 disulfide bridges follow: Cys-27/Cys-57, Cys-40/Cys-61, Cys-44/Cys-56, and Cys-50/Cys-66.

This sequence belongs to the venom waprin family. In terms of tissue distribution, expressed by the venom gland.

The protein localises to the secreted. In terms of biological role, damages membranes of susceptible bacteria. Has no hemolytic activity. Not toxic to mice. Does not inhibit the proteinases elastase and cathepsin G. The polypeptide is Waprin-Thr1 (Thrasops jacksonii (Jackson's black tree snake)).